We begin with the raw amino-acid sequence, 147 residues long: MKIIIQRVKKAQVSIEGQIQGKINQGFLLLVGVGPEDQEEDLDYAVRKLVNMRIFSDAEGKMNLSVKDIEGEILSISQFTLFADTKKGNRPAFTGAAKPDMASDFYDAFNQKLAQEVPVQTGIFGADMQVELVNNGPVTIILDTKKR.

Residues 136–137 (GP) carry the Gly-cisPro motif, important for rejection of L-amino acids motif.

The protein belongs to the DTD family. Homodimer.

It is found in the cytoplasm. The catalysed reaction is glycyl-tRNA(Ala) + H2O = tRNA(Ala) + glycine + H(+). The enzyme catalyses a D-aminoacyl-tRNA + H2O = a tRNA + a D-alpha-amino acid + H(+). In terms of biological role, an aminoacyl-tRNA editing enzyme that deacylates mischarged D-aminoacyl-tRNAs. Also deacylates mischarged glycyl-tRNA(Ala), protecting cells against glycine mischarging by AlaRS. Acts via tRNA-based rather than protein-based catalysis; rejects L-amino acids rather than detecting D-amino acids in the active site. By recycling D-aminoacyl-tRNA to D-amino acids and free tRNA molecules, this enzyme counteracts the toxicity associated with the formation of D-aminoacyl-tRNA entities in vivo and helps enforce protein L-homochirality. The polypeptide is D-aminoacyl-tRNA deacylase (Streptococcus pneumoniae (strain P1031)).